A 135-amino-acid chain; its full sequence is Helix-loop-helix protein 2 (135 aa).

The segment at 1 to 80 (MMLSPDQAAD…RRRATAKYRS (80 aa)) is disordered. The span at 10–21 (DSDHPSSAHSDP) shows a compositional bias: basic and acidic residues. Positions 68 to 80 (KRRRRRATAKYRS) are enriched in basic residues. The 53-residue stretch at 77–129 (KYRSAHATRERIRVEAFNLAFAELRKLLPTLPPDKKLSKIEILRLAICYISYL) folds into the bHLH domain.

As to quaternary structure, homodimer. Interacts and may form heterodimers with STAT3.

It is found in the nucleus. Its function is as follows. Transcription factor which binds the E box motif 5'-CA[TC][AG]TG-3'. Involved in regulating energy expenditure, body mass, voluntary physical activity, mating behavior and reproductive longevity, acting through the hypothalamic-pituitary-gonadal axis. Acts as a transcriptional activator of target genes, including NDN, PCSK1, MC4R. Is also a transcriptional activator of KISS1. May act centrally to regulate function of both white and brown adipose tissue. Together with NHLH1, required to maintain migration and survival of cells in the anterior extramural migration stream (aes), which forms the precerebellar nuclei. Also, in concert with NHLH1, may determine fate of gonadotropin releasing hormone-1 (GnRH-1) neurons. The protein is Helix-loop-helix protein 2 (NHLH2) of Homo sapiens (Human).